Reading from the N-terminus, the 180-residue chain is CASP-like protein XL3 (180 aa).

Residues 1-7 (MELSIQK) lie on the Cytoplasmic side of the membrane. A helical transmembrane segment spans residues 8 to 28 (IEALIRLSTIVMLVLTACLIG). Residues 29 to 49 (LDSQTKVIFYVQKKASFKDLR) lie on the Extracellular side of the membrane. The helical transmembrane segment at 50-70 (ALVGLLYITSLAAAYNLLQLC) threads the bilayer. The Cytoplasmic portion of the chain corresponds to 71-98 (CSSFSASYKGTSLQSYAYLAWLRYILDQ). Residues 99–119 (AVVYAVFAGNLAALEHSFLVL) form a helical membrane-spanning segment. Over 120–140 (TGEENFQWLKWCNKYTRFCTQ) the chain is Extracellular. The helical transmembrane segment at 141 to 161 (IGGSLLCGFVASLLMFSIASI) threads the bilayer. At 162 to 180 (SAFNLFRQYSPTKFMHLKL) the chain is on the cytoplasmic side.

This sequence belongs to the Casparian strip membrane proteins (CASP) family. In terms of assembly, homodimer and heterodimers.

It is found in the cell membrane. The polypeptide is CASP-like protein XL3 (XL3) (Gossypium hirsutum (Upland cotton)).